The chain runs to 602 residues: Aspartate--tRNA(Asp/Asn) ligase (602 aa).

An L-aspartate-binding site is contributed by E175. Residues Q199–K202 are aspartate. Residue R221 coordinates L-aspartate. Residues R221–E223 and Q230 contribute to the ATP site. Residue H458 participates in L-aspartate binding. Residue E492 participates in ATP binding. R499 contacts L-aspartate. G544 to R547 is a binding site for ATP.

Belongs to the class-II aminoacyl-tRNA synthetase family. Type 1 subfamily. Homodimer.

It localises to the cytoplasm. The catalysed reaction is tRNA(Asx) + L-aspartate + ATP = L-aspartyl-tRNA(Asx) + AMP + diphosphate. Its function is as follows. Aspartyl-tRNA synthetase with relaxed tRNA specificity since it is able to aspartylate not only its cognate tRNA(Asp) but also tRNA(Asn). Reaction proceeds in two steps: L-aspartate is first activated by ATP to form Asp-AMP and then transferred to the acceptor end of tRNA(Asp/Asn). This chain is Aspartate--tRNA(Asp/Asn) ligase, found in Cupriavidus pinatubonensis (strain JMP 134 / LMG 1197) (Cupriavidus necator (strain JMP 134)).